Here is a 129-residue protein sequence, read N- to C-terminus: Small ribosomal subunit protein bS6 (129 aa).

Positions 110-121 (FVRRDDERREDT) are enriched in basic and acidic residues. The segment at 110–129 (FVRRDDERREDTVEAASSEE) is disordered.

It belongs to the bacterial ribosomal protein bS6 family.

Functionally, binds together with bS18 to 16S ribosomal RNA. The polypeptide is Small ribosomal subunit protein bS6 (Aeromonas salmonicida (strain A449)).